The sequence spans 162 residues: MNTKFPITAKGFEKLEHELKHLKHVERKKISADIAEAREHGDLSENAEYEAAREKQAFIEGRIKELEDMTARAEIIDIGKLSGDNIKFGATVTLIDDDTEEEVTYIIVGEYEADITRKRVSIASPIAKALIGKSVGDFVEVTTPKGSKSYEVVTVEYKELEL.

Positions 45–74 (ENAEYEAAREKQAFIEGRIKELEDMTARAE) form a coiled coil.

Belongs to the GreA/GreB family.

Functionally, necessary for efficient RNA polymerase transcription elongation past template-encoded arresting sites. The arresting sites in DNA have the property of trapping a certain fraction of elongating RNA polymerases that pass through, resulting in locked ternary complexes. Cleavage of the nascent transcript by cleavage factors such as GreA or GreB allows the resumption of elongation from the new 3'terminus. GreA releases sequences of 2 to 3 nucleotides. The sequence is that of Transcription elongation factor GreA from Rickettsia conorii (strain ATCC VR-613 / Malish 7).